The primary structure comprises 300 residues: Porphobilinogen deaminase (300 aa).

The residue at position 243 (Cys243) is an S-(dipyrrolylmethanemethyl)cysteine.

It belongs to the HMBS family. In terms of assembly, monomer. Dipyrromethane serves as cofactor.

It carries out the reaction 4 porphobilinogen + H2O = hydroxymethylbilane + 4 NH4(+). Its pathway is porphyrin-containing compound metabolism; protoporphyrin-IX biosynthesis; coproporphyrinogen-III from 5-aminolevulinate: step 2/4. Tetrapolymerization of the monopyrrole PBG into the hydroxymethylbilane pre-uroporphyrinogen in several discrete steps. This Clostridium novyi (strain NT) protein is Porphobilinogen deaminase.